Here is a 183-residue protein sequence, read N- to C-terminus: Probable chorismate pyruvate-lyase 2 (183 aa).

Arginine 76, leucine 114, and glutamate 166 together coordinate substrate.

The protein belongs to the UbiC family.

Its subcellular location is the cytoplasm. It catalyses the reaction chorismate = 4-hydroxybenzoate + pyruvate. It functions in the pathway cofactor biosynthesis; ubiquinone biosynthesis. Removes the pyruvyl group from chorismate, with concomitant aromatization of the ring, to provide 4-hydroxybenzoate (4HB) for the ubiquinone pathway. The polypeptide is Probable chorismate pyruvate-lyase 2 (Pseudomonas fluorescens (strain Pf0-1)).